Here is a 370-residue protein sequence, read N- to C-terminus: Seipin (370 aa).

A signal peptide spans 1–18 (MNILLRLIVFALDPLGLG). Residues 19 to 55 (RRFLIRPAVNLGWNVYDRVRSKADEKVGTVRELVLRL) lie on the Cytoplasmic side of the membrane. A helical membrane pass occupies residues 56-76 (GLIAFAVVLIIWLAVFMYAAF). Residues 77–251 (YYVYMPAISH…GLRYIMFNWP (175 aa)) are Lumenal-facing. A helical transmembrane segment spans residues 252–272 (VLSAIVAISTNLFFILVVFLL). The Cytoplasmic segment spans residues 273-370 (SWYHWSDAKW…RPTKKTTADH (98 aa)). The segment at 346–370 (KSRSGKRESPDALRKRPTKKTTADH) is disordered. A compositionally biased stretch (basic and acidic residues) spans 350-359 (GKRESPDALR).

In terms of tissue distribution, widely expressed, with highest levels detected in fat body, moderate levels detected in salivary gland, midgut and muscle, and weak expression detected in brain.

It localises to the endoplasmic reticulum membrane. The protein localises to the lipid droplet. Acts as a tissue-autonomous lipid modulator, preventing ectopic lipid accumulation in salivary gland (a non-adipose tissue) and in promoting lipid storage in fat tissue. Required for the growth and maturation of small nascent lipid droplets (LDs) into larger mature LDs. The chain is Seipin from Drosophila melanogaster (Fruit fly).